The following is a 987-amino-acid chain: ATP-dependent 6-phosphofructokinase subunit alpha (987 aa).

The interval 1 to 602 (MPSSSDAINR…DYRYFRDISI (602 aa)) is N-terminal catalytic PFK domain 1. Residues G237, 300 to 301 (RC), and 330 to 333 (GDGS) each bind ATP. Mg(2+) is bound at residue D331. Residues 376-378 (SID), R413, 420-422 (MGR), E477, R504, and 510-513 (HVQR) contribute to the beta-D-fructose 6-phosphate site. Residue D378 is the Proton acceptor of the active site. Residues 603 to 616 (YDDGSKQLSEDKRL) form an interdomain linker region. Residues 617–987 (NIAIVHVGAA…KSLLKKQERY (371 aa)) form a C-terminal regulatory PFK domain 2 region. Residues R686, 743–747 (TVSNN), R781, 788–790 (QGG), E848, R874, 880–883 (HVQQ), and R958 each bind beta-D-fructose 2,6-bisphosphate.

Belongs to the phosphofructokinase type A (PFKA) family. ATP-dependent PFK group I subfamily. Eukaryotic two domain clade 'E' sub-subfamily. As to quaternary structure, heterooctamer of 4 alpha and 4 beta chains. The cofactor is Mg(2+).

It localises to the cytoplasm. It carries out the reaction beta-D-fructose 6-phosphate + ATP = beta-D-fructose 1,6-bisphosphate + ADP + H(+). It functions in the pathway carbohydrate degradation; glycolysis; D-glyceraldehyde 3-phosphate and glycerone phosphate from D-glucose: step 3/4. With respect to regulation, allosterically activated by ADP, AMP, or fructose 2,6-bisphosphate, and allosterically inhibited by ATP or citrate. Catalyzes the phosphorylation of D-fructose 6-phosphate to fructose 1,6-bisphosphate by ATP, the first committing step of glycolysis. The polypeptide is ATP-dependent 6-phosphofructokinase subunit alpha (PFK1) (Candida albicans (Yeast)).